We begin with the raw amino-acid sequence, 328 residues long: MPLHHLTRFPRLELIGAPTPLEYLPRLSDYLGREIYIKRDDVTPIAMGGNKLRKLEFLVADALREGADTLITAGAIQSNHVRQTAAVAAKLGLHCVALLENPIGTTAENYLTNGNRLLLDLFNTQIEMCDALTDPDAQLQTLATRIEAQGFRPYVIPVGGSSALGAMGYVESALEIAQQCEEVVGLSSVVVASGSAGTHAGLAVGLEHLMPDVELIGVTVSRSVAEQKPKVIALQQAIAGQLALTATADIHLWDDYFAPGYGVPNDAGMEAVKLLASLEGVLLDPVYTGKAMAGLIDGISQKRFNDDGPILFIHTGGAPALFAYHPHV.

N6-(pyridoxal phosphate)lysine is present on K51.

Belongs to the ACC deaminase/D-cysteine desulfhydrase family. Homodimer. Pyridoxal 5'-phosphate serves as cofactor.

The enzyme catalyses D-cysteine + H2O = hydrogen sulfide + pyruvate + NH4(+) + H(+). Catalyzes the alpha,beta-elimination reaction of D-cysteine and of several D-cysteine derivatives. It could be a defense mechanism against D-cysteine. The polypeptide is D-cysteine desulfhydrase (Salmonella agona (strain SL483)).